A 108-amino-acid chain; its full sequence is uncharacterized protein (108 aa).

Basic and acidic residues-rich tracts occupy residues 1–15 (MSEAKDNGSRDEVLV) and 53–69 (KLKDRESHQENEDRNSE). Residues 1–77 (MSEAKDNGSR…SELDQDEEDK (77 aa)) form a disordered region.

This is an uncharacterized protein from Homo sapiens (Human).